Reading from the N-terminus, the 216-residue chain is MKIVLLGPPGAGKGTQAKSISNRYSIPHISTGDIFRKNISENTPLGIEAKSYMDNGQLVPDEVTINMVKDRLQQDDCKNGYLLDGFPRTVHQAEALDNFLTEREESIDTALLIEVPKEFILERMTGRRVCPSCGASYHIKFNPPTNDGKCDLCGSDVIQRKDDTEETVKERLDVYENQTQPLIDFYKNKKQLSVVDGTQAINEVFESICKILGSDK.

10 to 15 contributes to the ATP binding site; it reads GAGKGT. Residues 30–59 form an NMP region; it reads STGDIFRKNISENTPLGIEAKSYMDNGQLV. AMP is bound by residues T31, R36, 57-59, 85-88, and Q92; these read QLV and GFPR. The interval 126 to 163 is LID; it reads GRRVCPSCGASYHIKFNPPTNDGKCDLCGSDVIQRKDD. R127 serves as a coordination point for ATP. C130 and C133 together coordinate Zn(2+). Residue 136-137 participates in ATP binding; that stretch reads SY. Zn(2+) is bound by residues C150 and C153. The AMP site is built by R160 and R171. Residue Q199 coordinates ATP.

Belongs to the adenylate kinase family. As to quaternary structure, monomer.

The protein localises to the cytoplasm. It carries out the reaction AMP + ATP = 2 ADP. It functions in the pathway purine metabolism; AMP biosynthesis via salvage pathway; AMP from ADP: step 1/1. Functionally, catalyzes the reversible transfer of the terminal phosphate group between ATP and AMP. Plays an important role in cellular energy homeostasis and in adenine nucleotide metabolism. This is Adenylate kinase from Clostridium perfringens (strain ATCC 13124 / DSM 756 / JCM 1290 / NCIMB 6125 / NCTC 8237 / Type A).